A 681-amino-acid chain; its full sequence is uncharacterized protein (681 aa).

It belongs to the protein kinase superfamily. ADCK protein kinase family.

This is an uncharacterized protein from Synechocystis sp. (strain ATCC 27184 / PCC 6803 / Kazusa).